A 124-amino-acid chain; its full sequence is Small ribosomal subunit protein uS12 (124 aa).

The disordered stretch occupies residues M1–D25.

Belongs to the universal ribosomal protein uS12 family. In terms of assembly, part of the 30S ribosomal subunit. Contacts proteins S8 and S17. May interact with IF1 in the 30S initiation complex.

Its function is as follows. With S4 and S5 plays an important role in translational accuracy. In terms of biological role, interacts with and stabilizes bases of the 16S rRNA that are involved in tRNA selection in the A site and with the mRNA backbone. Located at the interface of the 30S and 50S subunits, it traverses the body of the 30S subunit contacting proteins on the other side and probably holding the rRNA structure together. The combined cluster of proteins S8, S12 and S17 appears to hold together the shoulder and platform of the 30S subunit. This is Small ribosomal subunit protein uS12 from Xylella fastidiosa (strain 9a5c).